Here is a 589-residue protein sequence, read N- to C-terminus: ATP-dependent lipid A-core flippase (589 aa).

5 helical membrane passes run 29–49 (WLLV…STFL), 68–88 (ALWL…AGYI), 157–177 (VIGA…AILL), 254–274 (ISSA…LLIA), and 283–303 (LSPG…PALK). In terms of domain architecture, ABC transmembrane type-1 spans 32–314 (VVAACGALLE…LTNVQNMLQS (283 aa)). One can recognise an ABC transporter domain in the interval 346–582 (IEFRGITARY…DGLYAYLYSM (237 aa)). ATP is bound at residue 380 to 387 (GRSGSGKS).

The protein belongs to the ABC transporter superfamily. Lipid exporter (TC 3.A.1.106) family. Homodimer.

It is found in the cell inner membrane. It catalyses the reaction ATP + H2O + lipid A-core oligosaccharideSide 1 = ADP + phosphate + lipid A-core oligosaccharideSide 2.. In terms of biological role, involved in lipopolysaccharide (LPS) biosynthesis. Translocates lipid A-core from the inner to the outer leaflet of the inner membrane. Transmembrane domains (TMD) form a pore in the inner membrane and the ATP-binding domain (NBD) is responsible for energy generation. The chain is ATP-dependent lipid A-core flippase from Xylella fastidiosa (strain Temecula1 / ATCC 700964).